The primary structure comprises 75 residues: Putative UPF0377 protein YJL222W-A (75 aa).

It belongs to the UPF0377 family.

The protein is Putative UPF0377 protein YJL222W-A of Saccharomyces cerevisiae (strain ATCC 204508 / S288c) (Baker's yeast).